We begin with the raw amino-acid sequence, 300 residues long: Glycine betaine/carnitine transport binding protein GbuC (300 aa).

Positions Met1–Ala20 are cleaved as a signal peptide. Cys21 is lipidated: N-palmitoyl cysteine. Residue Cys21 is the site of S-diacylglycerol cysteine attachment.

In terms of assembly, the complex is composed of two ATP-binding proteins (GbuA), two transmembrane proteins (GbuB) and a solute-binding protein (GbuC).

It localises to the cell membrane. Its activity is regulated as follows. The complex is activated by an osmotic gradient or by low temperature. Part of the ABC transporter complex GbuABC involved in glycine betaine uptake. Involved, with BetL and OpuC, in osmoprotection and cryoprotection of Listeria. Can also uptake carnitine when carnitine is abundant in the growth medium. This chain is Glycine betaine/carnitine transport binding protein GbuC (gbuC), found in Listeria monocytogenes serotype 1/2a (strain 10403S).